A 281-amino-acid chain; its full sequence is NADPH-dependent 7-cyano-7-deazaguanine reductase (281 aa).

88-90 (IES) provides a ligand contact to substrate. An NADPH-binding site is contributed by 90–91 (SK). Cys-189 (thioimide intermediate) is an active-site residue. Asp-196 acts as the Proton donor in catalysis. 228 to 229 (HE) is a binding site for substrate. Residue 257–258 (RG) participates in NADPH binding.

The protein belongs to the GTP cyclohydrolase I family. QueF type 2 subfamily. In terms of assembly, homodimer.

It is found in the cytoplasm. The catalysed reaction is 7-aminomethyl-7-carbaguanine + 2 NADP(+) = 7-cyano-7-deazaguanine + 2 NADPH + 3 H(+). It functions in the pathway tRNA modification; tRNA-queuosine biosynthesis. Its function is as follows. Catalyzes the NADPH-dependent reduction of 7-cyano-7-deazaguanine (preQ0) to 7-aminomethyl-7-deazaguanine (preQ1). This is NADPH-dependent 7-cyano-7-deazaguanine reductase from Yersinia enterocolitica serotype O:8 / biotype 1B (strain NCTC 13174 / 8081).